Consider the following 937-residue polypeptide: Protocadherin alpha-7 (937 aa).

The N-terminal stretch at 1–29 is a signal peptide; sequence MVCPNGYDPGGRHLLLFIIILAAWEAGRG. 6 Cadherin domains span residues 30–133, 134–242, 243–350, 351–455, 456–565, and 581–678; these read QLHY…PPVF, PATQ…APVF, DRTL…APQL, TLTS…APAF, AQPE…APAL, and VPRS…APKA. At 30–697 the chain is on the extracellular side; sequence QLHYSVPEEA…GPETELVDVN (668 aa). An intrachain disulfide couples Cys-96 to Cys-102. Asn-254 and Asn-265 each carry an N-linked (GlcNAc...) asparagine glycan. A glycan (N-linked (GlcNAc...) asparagine) is linked at Asn-548. A helical transmembrane segment spans residues 698–718; it reads VYLIIAICAVSSLLVLTLLLY. Topologically, residues 719–937 are cytoplasmic; sequence TALRCSAPSS…GNSTTDNSDQ (219 aa). Disordered stretches follow at residues 756-795 and 817-843; these read QRVC…DWRY and AGPG…EVSP. PXXP repeat units lie at residues 774-777, 786-789, 819-822, 860-863, and 878-881; these read PSLP, PRQP, PGGP, PGNP, and PGSP. The 5 X 4 AA repeats of P-X-X-P stretch occupies residues 774–881; it reads PSLPQGPSST…PDKFIIPGSP (108 aa). Over residues 775–787 the composition is skewed to polar residues; sequence SLPQGPSSTDNPR. A disordered region spans residues 888 to 937; that stretch reads QEPANSQIDKSDFITFGKKEETKKKKKKKKGNKTQEKKEKGNSTTDNSDQ. Residues 896-910 show a composition bias toward basic and acidic residues; that stretch reads DKSDFITFGKKEETK.

Forms homodimers in trans (molecules expressed by two different cells). Forms promiscuous heterodimers in cis (at the plasma membrane of the same cell) with other protocadherins.

The protein resides in the cell membrane. Functionally, calcium-dependent cell-adhesion protein involved in cells self-recognition and non-self discrimination. Thereby, it is involved in the establishment and maintenance of specific neuronal connections in the brain. This chain is Protocadherin alpha-7, found in Pan troglodytes (Chimpanzee).